The sequence spans 76 residues: Small ribosomal subunit protein bS18 (76 aa).

The protein belongs to the bacterial ribosomal protein bS18 family. As to quaternary structure, part of the 30S ribosomal subunit. Forms a tight heterodimer with protein bS6.

Its function is as follows. Binds as a heterodimer with protein bS6 to the central domain of the 16S rRNA, where it helps stabilize the platform of the 30S subunit. The protein is Small ribosomal subunit protein bS18 of Pelotomaculum thermopropionicum (strain DSM 13744 / JCM 10971 / SI).